The sequence spans 513 residues: MAAFKLDFLPEMMVDHCSLNSSPVSKKMNGTLDHPDQPDLDAIKMFVGQVPRTWSEKDLRELFEQYGAVYEINVLRDRSQNPPQSKGCCFVTFYTRKAALEAQNALHNMKVLPGMHHPIQMKPADSEKNNAVEDRKLFIGMISKKCTENDIRVMFSSFGQIEECRILWGPDGLSRGCALVTFTTRAMAQTAIKAMHQAQTMEGCSSPMVVKFADTQKDKEQKRMAQQLQQQMQQISAASVWGNLAGLNTLGPQYLALYLQLLQQTASSGNLNTLSSLHPMGGLNAMQLQNLAALAAAASAAQNTPSGTNALTTSSSPLSVLTSSGSSPSSSSSNSVNPIASLGALQTLAGATAGLNVGSLAGMAALNGGLGSSGLSNGTGSTMEALTQAYSGIQQYAAAALPTLYNQNLLTQQSIGAAGSQKEGPEGANLFIYHLPQEFGDQDLLQMFMPFGNVVSAKVFIDKQTNLSKCFGFVSYDNPVSAQAAIQSMNGFQIGMKRLKVQLKRSKNDSKPY.

A Phosphothreonine modification is found at Thr-31. 2 RRM domains span residues 43–126 (IKMF…PADS) and 135–215 (RKLF…FADT). Lys-136 participates in a covalent cross-link: Glycyl lysine isopeptide (Lys-Gly) (interchain with G-Cter in SUMO2). A phosphoserine mark is found at Ser-206 and Ser-329. The tract at residues 304–336 (TPSGTNALTTSSSPLSVLTSSGSSPSSSSSNSV) is disordered. A compositionally biased stretch (low complexity) spans 311-336 (LTTSSSPLSVLTSSGSSPSSSSSNSV). The RRM 3 domain maps to 428 to 506 (ANLFIYHLPQ…KRLKVQLKRS (79 aa)).

This sequence belongs to the CELF/BRUNOL family. As to quaternary structure, associates with polysomes. Interacts with HNRNPH1; the interaction in RNA-dependent. Interacts with PARN. Component of an EIF2 complex at least composed of CELF1/CUGBP1, CALR, CALR3, EIF2S1, EIF2S2, HSP90B1 and HSPA5.

The protein resides in the nucleus. It is found in the cytoplasm. Its function is as follows. RNA-binding protein implicated in the regulation of several post-transcriptional events. Involved in pre-mRNA alternative splicing, mRNA translation and stability. Mediates exon inclusion and/or exclusion in pre-mRNA that are subject to tissue-specific and developmentally regulated alternative splicing. Specifically activates exon 5 inclusion of cardiac isoforms of TNNT2 during heart remodeling at the juvenile to adult transition. Acts both as an activator and as a repressor of a pair of coregulated exons: promotes inclusion of the smooth muscle (SM) exon but exclusion of the non-muscle (NM) exon in actinin pre-mRNAs. Activates SM exon 5 inclusion by antagonizing the repressive effect of PTB. Promotes exclusion of exon 11 of the INSR pre-mRNA. Inhibits, together with HNRNPH1, insulin receptor (IR) pre-mRNA exon 11 inclusion in myoblast. Increases translation and controls the choice of translation initiation codon of CEBPB mRNA. Increases mRNA translation of CEBPB in aging liver. Increases translation of CDKN1A mRNA by antagonizing the repressive effect of CALR3. Mediates rapid cytoplasmic mRNA deadenylation. Recruits the deadenylase PARN to the poly(A) tail of EDEN-containing mRNAs to promote their deadenylation. Required for completion of spermatogenesis. Binds to (CUG)n triplet repeats in the 3'-UTR of transcripts such as DMPK and to Bruno response elements (BREs). Binds to muscle-specific splicing enhancer (MSE) intronic sites flanking the alternative exon 5 of TNNT2 pre-mRNA. Binds to AU-rich sequences (AREs or EDEN-like) localized in the 3'-UTR of JUN and FOS mRNAs. Binds to the IR RNA. Binds to the 5'-region of CDKN1A and CEBPB mRNAs. Binds with the 5'-region of CEBPB mRNA in aging liver. May be a specific regulator of miRNA biogenesis. Binds to primary microRNA pri-MIR140 and, with CELF2, negatively regulates the processing to mature miRNA. In Pongo abelii (Sumatran orangutan), this protein is CUGBP Elav-like family member 1 (CELF1).